A 276-amino-acid chain; its full sequence is Large ribosomal subunit protein uL2 (276 aa).

The segment at 219–276 (TVRGSAMNPNDHPHGGGEGRSPIGRPSPVTPWGKPALGYKTRKKNKHSDKFIVTGRKR) is disordered.

It belongs to the universal ribosomal protein uL2 family. As to quaternary structure, part of the 50S ribosomal subunit. Forms a bridge to the 30S subunit in the 70S ribosome.

Its function is as follows. One of the primary rRNA binding proteins. Required for association of the 30S and 50S subunits to form the 70S ribosome, for tRNA binding and peptide bond formation. It has been suggested to have peptidyltransferase activity; this is somewhat controversial. Makes several contacts with the 16S rRNA in the 70S ribosome. The sequence is that of Large ribosomal subunit protein uL2 from Alkaliphilus metalliredigens (strain QYMF).